The primary structure comprises 396 residues: Succinyl-diaminopimelate desuccinylase (396 aa).

His74 is a binding site for Zn(2+). Residue Asp76 is part of the active site. Residue Asp107 coordinates Zn(2+). Catalysis depends on Glu142, which acts as the Proton acceptor. 3 residues coordinate Zn(2+): Glu143, Glu171, and His360.

The protein belongs to the peptidase M20A family. DapE subfamily. As to quaternary structure, homodimer. Zn(2+) serves as cofactor. Requires Co(2+) as cofactor.

It carries out the reaction N-succinyl-(2S,6S)-2,6-diaminopimelate + H2O = (2S,6S)-2,6-diaminopimelate + succinate. It participates in amino-acid biosynthesis; L-lysine biosynthesis via DAP pathway; LL-2,6-diaminopimelate from (S)-tetrahydrodipicolinate (succinylase route): step 3/3. In terms of biological role, catalyzes the hydrolysis of N-succinyl-L,L-diaminopimelic acid (SDAP), forming succinate and LL-2,6-diaminopimelate (DAP), an intermediate involved in the bacterial biosynthesis of lysine and meso-diaminopimelic acid, an essential component of bacterial cell walls. The sequence is that of Succinyl-diaminopimelate desuccinylase from Methylobacterium sp. (strain 4-46).